Consider the following 355-residue polypeptide: Methylthioribose-1-phosphate isomerase (355 aa).

Substrate contacts are provided by residues 52–54, Arg-95, and Gln-204; that span reads RGA. The Proton donor role is filled by Asp-245. 255 to 256 contributes to the substrate binding site; sequence NK.

It belongs to the eIF-2B alpha/beta/delta subunits family. MtnA subfamily.

The enzyme catalyses 5-(methylsulfanyl)-alpha-D-ribose 1-phosphate = 5-(methylsulfanyl)-D-ribulose 1-phosphate. The protein operates within amino-acid biosynthesis; L-methionine biosynthesis via salvage pathway; L-methionine from S-methyl-5-thio-alpha-D-ribose 1-phosphate: step 1/6. Catalyzes the interconversion of methylthioribose-1-phosphate (MTR-1-P) into methylthioribulose-1-phosphate (MTRu-1-P). In Acaryochloris marina (strain MBIC 11017), this protein is Methylthioribose-1-phosphate isomerase.